Here is a 300-residue protein sequence, read N- to C-terminus: Polyamine aminopropyltransferase (300 aa).

In terms of domain architecture, PABS spans 4 to 237 (WHWHIEWQTP…GLWGFVYASD (234 aa)). Gln33 serves as a coordination point for S-methyl-5'-thioadenosine. The spermidine site is built by His64 and Glu88. S-methyl-5'-thioadenosine is bound by residues Asp108 and 140-141 (DG). Residue Asp158 is the Proton acceptor of the active site. Pro167 is a binding site for S-methyl-5'-thioadenosine.

This sequence belongs to the spermidine/spermine synthase family. Homodimer or homotetramer.

It localises to the cytoplasm. The catalysed reaction is S-adenosyl 3-(methylsulfanyl)propylamine + putrescine = S-methyl-5'-thioadenosine + spermidine + H(+). The protein operates within amine and polyamine biosynthesis; spermidine biosynthesis; spermidine from putrescine: step 1/1. In terms of biological role, catalyzes the irreversible transfer of a propylamine group from the amino donor S-adenosylmethioninamine (decarboxy-AdoMet) to putrescine (1,4-diaminobutane) to yield spermidine. The protein is Polyamine aminopropyltransferase of Sulfurisphaera tokodaii (strain DSM 16993 / JCM 10545 / NBRC 100140 / 7) (Sulfolobus tokodaii).